A 206-amino-acid chain; its full sequence is Acidic proline-rich protein PRP33 (206 aa).

An N-terminal signal peptide occupies residues 1–13; it reads MLVVLLTAALLVL. The segment at 15–206 is disordered; the sequence is SAHGSDEEVI…EQPSYLWFSS (192 aa). Residues 55 to 71 are compositionally biased toward acidic residues; sequence ENGDGDDSDDGDDDGSG. A run of 6 repeats spans residues 80 to 97, 98 to 115, 116 to 133, 134 to 152, 153 to 170, and 171 to 189. The 6 X 18 AA approximate tandem repeats stretch occupies residues 80-189; it reads PPPHGGNHQR…RPPQPRKPQD (110 aa). A compositionally biased stretch (low complexity) spans 103–112; the sequence is GPQTSSQPGN. Pro residues predominate over residues 113-174; the sequence is PQGPPPQGGP…PGNPQGPPPQ (62 aa).

The protein resides in the secreted. In terms of biological role, may protect teeth by binding to tannins. In Rattus norvegicus (Rat), this protein is Acidic proline-rich protein PRP33 (Prpg1).